An 80-amino-acid polypeptide reads, in one-letter code: CLAVATA3/ESR (CLE)-related protein 14 (80 aa).

An N-terminal signal peptide occupies residues 1 to 26; that stretch reads MKVWSQRLSFLIVMIFILAGLHSSSA. Hydroxyproline occurs at positions 71 and 74. The O-linked (Ara...) hydroxyproline glycan is linked to Pro74.

Belongs to the CLV3/ESR signal peptide family. As to quaternary structure, interacts with the extracellular leucine-rich repeat region of CLV2 and PEPR2. Post-translationally, the O-glycosylation (arabinosylation) of the hydroxyproline Pro-74 enhances binding affinity of the CLE14p peptide for its receptor. As to expression, mostly expressed in roots, and, to a lower extent, in seedlings and leaves. Expressed in the primary root tip under Pi deficiency.

Its subcellular location is the secreted. The protein localises to the extracellular space. Its function is as follows. Extracellular signal peptide that regulates cell fate. Represses root apical meristem maintenance. Acts as an elicitor of the root meristem differentiation through the CLV2/CRN complex signaling pathway. Inhibits irreversibly root growth by reducing cell division rates in the root apical meristem. Regulates the transition of protophloem cells from proliferation to differentiation, thus impinging on postembryonic growth capacity of the root meristem; this signaling pathway requires CRN and CLV2. This Arabidopsis thaliana (Mouse-ear cress) protein is CLAVATA3/ESR (CLE)-related protein 14.